We begin with the raw amino-acid sequence, 124 residues long: Small ribosomal subunit protein uS12 (124 aa).

3-methylthioaspartic acid is present on Asp89.

This sequence belongs to the universal ribosomal protein uS12 family. As to quaternary structure, part of the 30S ribosomal subunit. Contacts proteins S8 and S17. May interact with IF1 in the 30S initiation complex.

With S4 and S5 plays an important role in translational accuracy. Functionally, interacts with and stabilizes bases of the 16S rRNA that are involved in tRNA selection in the A site and with the mRNA backbone. Located at the interface of the 30S and 50S subunits, it traverses the body of the 30S subunit contacting proteins on the other side and probably holding the rRNA structure together. The combined cluster of proteins S8, S12 and S17 appears to hold together the shoulder and platform of the 30S subunit. The protein is Small ribosomal subunit protein uS12 of Vibrio cholerae serotype O1 (strain ATCC 39315 / El Tor Inaba N16961).